Consider the following 396-residue polypeptide: S-adenosylmethionine synthase 4 (396 aa).

Position 13 (Glu13) interacts with Mg(2+). Residue His19 coordinates ATP. Glu47 serves as a coordination point for K(+). Residues Glu60 and Gln103 each coordinate L-methionine. ATP-binding positions include 171–173 (DGK), 239–242 (SGRF), Asp250, 256–257 (RK), Ala273, Lys277, and Lys281. Asp250 contributes to the L-methionine binding site. Lys281 lines the L-methionine pocket.

The protein belongs to the AdoMet synthase family. As to quaternary structure, homotetramer. Requires Mn(2+) as cofactor. Mg(2+) serves as cofactor. The cofactor is Co(2+). It depends on K(+) as a cofactor. As to expression, expressed in roots, stems and leaves (at protein level).

It is found in the cytoplasm. The catalysed reaction is L-methionine + ATP + H2O = S-adenosyl-L-methionine + phosphate + diphosphate. It participates in amino-acid biosynthesis; S-adenosyl-L-methionine biosynthesis; S-adenosyl-L-methionine from L-methionine: step 1/1. Functionally, catalyzes the formation of S-adenosylmethionine from methionine and ATP. The reaction comprises two steps that are both catalyzed by the same enzyme: formation of S-adenosylmethionine (AdoMet) and triphosphate, and subsequent hydrolysis of the triphosphate. May be involved in the synthesis of betain in response to abiotic stress such as high salinity. This Atriplex nummularia (Old man saltbush) protein is S-adenosylmethionine synthase 4 (SAMS4).